The sequence spans 680 residues: DNA ligase (680 aa).

Residues 38–42, 87–88, and Glu-119 each bind NAD(+); these read DAEYD and SL. Lys-121 functions as the N6-AMP-lysine intermediate in the catalytic mechanism. NAD(+) is bound by residues Arg-142, Glu-179, Lys-296, and Lys-320. Zn(2+) contacts are provided by Cys-414, Cys-417, Cys-432, and Cys-438. Residues 597 to 680 form the BRCT domain; sequence IEDLPLKGLT…DLLRKHGRLE (84 aa).

Belongs to the NAD-dependent DNA ligase family. LigA subfamily. Mg(2+) serves as cofactor. Mn(2+) is required as a cofactor.

The enzyme catalyses NAD(+) + (deoxyribonucleotide)n-3'-hydroxyl + 5'-phospho-(deoxyribonucleotide)m = (deoxyribonucleotide)n+m + AMP + beta-nicotinamide D-nucleotide.. Functionally, DNA ligase that catalyzes the formation of phosphodiester linkages between 5'-phosphoryl and 3'-hydroxyl groups in double-stranded DNA using NAD as a coenzyme and as the energy source for the reaction. It is essential for DNA replication and repair of damaged DNA. The sequence is that of DNA ligase from Cellvibrio japonicus (strain Ueda107) (Pseudomonas fluorescens subsp. cellulosa).